We begin with the raw amino-acid sequence, 305 residues long: Hydrogen peroxide-inducible genes activator (305 aa).

An HTH lysR-type domain is found at 1–58 (MNIRDLEYLVALAEHRHFRRAADSCHVSQPTLSGQIRKLEDELGVMLLERTSRKVLFT). The H-T-H motif DNA-binding region spans 18–37 (FRRAADSCHVSQPTLSGQIR). 2 disulfide bridges follow: Cys-180/Cys-259 and Cys-199/Cys-208. Cys-199 carries the post-translational modification Cysteine sulfenic acid (-SOH); alternate. Cys-199 carries the S-glutathionyl cysteine; alternate modification. The residue at position 199 (Cys-199) is an S-nitrosocysteine; alternate.

This sequence belongs to the LysR transcriptional regulatory family. Homodimer and homotetramer. Oxidized on Cys-199; the Cys-SOH formed in response to oxidative signaling triggers a conformational change and the onset of transcriptional activity with a specific DNA-binding affinity. Cys-199-SOH rapidly reacts with Cys-208-SH to form a disulfide bond. In terms of processing, S-nitrosylation in response to nitrosative signaling triggers a conformational change and the onset of transcriptional activity with a specific DNA-binding affinity. Post-translationally, glutathionylation in response to redox signaling triggers the onset of transcriptional activity with a specific DNA-binding affinity.

Its activity is regulated as follows. Activated by oxidation of Cys-199 resulting in the alternative formation of cystine, sulfenic acid, S-nitroso- or glutathione-bound cysteine. Hydrogen peroxide sensor. Activates the expression of a regulon of hydrogen peroxide-inducible genes such as katG, gor, ahpC, ahpF, oxyS (a regulatory RNA), dps, fur and grxA. OxyR expression is negatively autoregulated by binding to a 43 bp region upstream of its own coding sequence. OxyR is inactivated by reduction of its essential disulfide bond by the product of GrxA, itself positively regulated by OxyR. Also has a positive regulatory effect on the production of surface proteins that control the colony morphology and auto-aggregation ability. The protein is Hydrogen peroxide-inducible genes activator (oxyR) of Escherichia coli O157:H7.